A 360-amino-acid polypeptide reads, in one-letter code: Phosphoserine aminotransferase (360 aa).

Residue Arg42 coordinates L-glutamate. Pyridoxal 5'-phosphate is bound by residues 76 to 77 (AS), Trp102, Thr152, Asp172, and Gln195. Position 196 is an N6-(pyridoxal phosphate)lysine (Lys196). 237–238 (NT) serves as a coordination point for pyridoxal 5'-phosphate.

This sequence belongs to the class-V pyridoxal-phosphate-dependent aminotransferase family. SerC subfamily. As to quaternary structure, homodimer. It depends on pyridoxal 5'-phosphate as a cofactor.

It is found in the cytoplasm. The enzyme catalyses O-phospho-L-serine + 2-oxoglutarate = 3-phosphooxypyruvate + L-glutamate. It catalyses the reaction 4-(phosphooxy)-L-threonine + 2-oxoglutarate = (R)-3-hydroxy-2-oxo-4-phosphooxybutanoate + L-glutamate. The protein operates within amino-acid biosynthesis; L-serine biosynthesis; L-serine from 3-phospho-D-glycerate: step 2/3. In terms of biological role, catalyzes the reversible conversion of 3-phosphohydroxypyruvate to phosphoserine and of 3-hydroxy-2-oxo-4-phosphonooxybutanoate to phosphohydroxythreonine. The polypeptide is Phosphoserine aminotransferase (Bacillus cereus (strain ZK / E33L)).